The primary structure comprises 43 residues: Protein PsbN (43 aa).

A helical transmembrane segment spans residues 7-27; the sequence is VTIFISGLLVSFTGYALYIAF.

The protein belongs to the PsbN family.

The protein resides in the plastid. The protein localises to the chloroplast thylakoid membrane. Its function is as follows. May play a role in photosystem I and II biogenesis. This is Protein PsbN from Dioscorea bulbifera (Air potato).